The chain runs to 243 residues: PHO85 cyclin-like protein psl1 (243 aa).

Polar residues predominate over residues 211-224 (ESPISHTPQQNQQD). The interval 211–231 (ESPISHTPQQNQQDEQPRRPI) is disordered.

It belongs to the cyclin family. PHO80 subfamily. In terms of assembly, forms a cyclin-CDK complex with pef1.

The protein resides in the cytoplasm. The protein localises to the nucleus. Cyclin partner of the cyclin-dependent kinase (CDK) pef1 (PHO85 homolog). In Schizosaccharomyces pombe (strain 972 / ATCC 24843) (Fission yeast), this protein is PHO85 cyclin-like protein psl1 (psl1).